Reading from the N-terminus, the 81-residue chain is Escargot/snail protein homolog (81 aa).

4 C2H2-type zinc fingers span residues 1 to 5 (HQQFH), 17 to 39 (FSCK…IRTH), 43 to 65 (CKCH…IRTH), and 71 to 81 (FSCQHCNRAFA).

It belongs to the snail C2H2-type zinc-finger protein family.

The protein localises to the nucleus. This Apis mellifera (Honeybee) protein is Escargot/snail protein homolog.